The primary structure comprises 348 residues: MTLTTATSGAIVFSGATLLVSLFAAASLYSQVSNIWNELDAEIANFRSLTEDMWVDMVKLGAGTASNRVRRQQYGGYGATGVQPPAPTPNPYGGYGASQPAPPEKFPDGIPNGGNQPKFPGGGFPDGPFPNGGGPRGGNQCQCTVENSCPPGPAGPEGEEGPDGHDGQDGVPGFDGKDAEDVQNTPPTGCFTCPQGPLGPQGPNGAPGLRGMRGARGQPGRPGRDGNPGMPGDCGPPGAPGSDGKPGSPGGKGDDGERPLGRPGPRGPPGEAGPEGPQGPTGRDAYPGQSGPQGEPGLQGYGGAAGEDGPEGPPGAPGLPGKDAEYCKCPGREGDAGRSARRHRKFQL.

The tract at residues 76-348 (GYGATGVQPP…SARRHRKFQL (273 aa)) is disordered. The span at 120 to 137 (PGGGFPDGPFPNGGGPRG) shows a compositional bias: gly residues. Triple-helical region stretches follow at residues 152–178 (GPAG…DGKD), 196–258 (GPLG…DGER), 261–284 (GRPG…TGRD), and 288–323 (GQSG…PGKD). Low complexity predominate over residues 194–231 (PQGPLGPQGPNGAPGLRGMRGARGQPGRPGRDGNPGMP). The span at 297-306 (GLQGYGGAAG) shows a compositional bias: gly residues. A compositionally biased stretch (basic and acidic residues) spans 322-338 (KDAEYCKCPGREGDAGR). Residues 339–348 (SARRHRKFQL) are compositionally biased toward basic residues.

This sequence belongs to the cuticular collagen family. Collagen polypeptide chains are complexed within the cuticle by disulfide bonds and other types of covalent cross-links. As to expression, localizes in stripes along the alae.

In terms of biological role, nematode cuticles are composed largely of collagen-like proteins. The cuticle functions both as an exoskeleton and as a barrier to protect the worm from its environment. May play a role in cuticle remodeling in response to the environment. Involved in body morphogenesis. This chain is Cuticle collagen rol-6 (rol-6), found in Caenorhabditis elegans.